The chain runs to 215 residues: Beta-crystallin A3-2 (215 aa).

The interval 1 to 30 (MEIPAIQTEREDITSEKMAQINPLPVPLGP) is N-terminal arm. Beta/gamma crystallin 'Greek key' domains are found at residues 31–70 (WKIT…KVEC) and 71–117 (GAWI…RPIC). A connecting peptide region spans residues 118–123 (SANHEE). 2 Beta/gamma crystallin 'Greek key' domains span residues 124–165 (SKLV…KVQC) and 166–214 (GAWV…RRIQ).

Belongs to the beta/gamma-crystallin family. In terms of assembly, homo/heterodimer, or complexes of higher-order. The structure of beta-crystallin oligomers seems to be stabilized through interactions between the N-terminal arms. Post-translationally, the N-terminus is blocked.

In terms of biological role, crystallins are the dominant structural components of the vertebrate eye lens. The protein is Beta-crystallin A3-2 of Aquarana catesbeiana (American bullfrog).